We begin with the raw amino-acid sequence, 276 residues long: MLIQFSKMHGLGNDFVVVDGVTQKVFFNAETLKRLGDRHFGIGFDQLLLVEPPYDPDLDFHYRIFNADGSEVQQCGNGARCFARFVRLKGLTNKDRIAVSTVSGRIVLQLEDNDQVTVNMGVPEFEPAKIPFRALKAEKLYLLRVAEQTVMCGVVSMGNPHCVIEVPSVKDAPVETLGPKLESFDRFPERINVGFMEVVSASEINLRVYERGAGETLACGTGACAAVVVGIQQEKLKGRVKVNLPGGSLYISWNGPGSPVYMTGPAEHVFDGQIEL.

Substrate contacts are provided by N13, Q46, and N66. The Proton donor role is filled by C75. Substrate contacts are provided by residues 76–77 (GN), N159, N192, and 210–211 (ER). The active-site Proton acceptor is C219. Residue 220–221 (GT) participates in substrate binding.

This sequence belongs to the diaminopimelate epimerase family. Homodimer.

The protein localises to the cytoplasm. It catalyses the reaction (2S,6S)-2,6-diaminopimelate = meso-2,6-diaminopimelate. The protein operates within amino-acid biosynthesis; L-lysine biosynthesis via DAP pathway; DL-2,6-diaminopimelate from LL-2,6-diaminopimelate: step 1/1. Its function is as follows. Catalyzes the stereoinversion of LL-2,6-diaminopimelate (L,L-DAP) to meso-diaminopimelate (meso-DAP), a precursor of L-lysine and an essential component of the bacterial peptidoglycan. This chain is Diaminopimelate epimerase, found in Tolumonas auensis (strain DSM 9187 / NBRC 110442 / TA 4).